The chain runs to 440 residues: N-succinylarginine dihydrolase (440 aa).

Residues 17–26 (GGLSPGNLAS), N108, and 135–136 (HR) contribute to the substrate site. The tract at residues 17–37 (GGLSPGNLASQSHVGEPSHPR) is disordered. Residue E172 is part of the active site. R210 is a binding site for substrate. H246 is an active-site residue. 2 residues coordinate substrate: D248 and N358. C364 serves as the catalytic Nucleophile.

Belongs to the succinylarginine dihydrolase family. As to quaternary structure, homodimer.

It catalyses the reaction N(2)-succinyl-L-arginine + 2 H2O + 2 H(+) = N(2)-succinyl-L-ornithine + 2 NH4(+) + CO2. Its pathway is amino-acid degradation; L-arginine degradation via AST pathway; L-glutamate and succinate from L-arginine: step 2/5. In terms of biological role, catalyzes the hydrolysis of N(2)-succinylarginine into N(2)-succinylornithine, ammonia and CO(2). In Myxococcus xanthus (strain DK1622), this protein is N-succinylarginine dihydrolase.